The following is a 79-amino-acid chain: ATP synthase subunit c (79 aa).

2 helical membrane passes run 11-31 (IAAAIMMGLSAIGAAVGIGIL) and 53-73 (FFIVMGLVDAIPMITVGLSLY).

It belongs to the ATPase C chain family. F-type ATPases have 2 components, F(1) - the catalytic core - and F(0) - the membrane proton channel. F(1) has five subunits: alpha(3), beta(3), gamma(1), delta(1), epsilon(1). F(0) has three main subunits: a(1), b(2) and c(10-14). The alpha and beta chains form an alternating ring which encloses part of the gamma chain. F(1) is attached to F(0) by a central stalk formed by the gamma and epsilon chains, while a peripheral stalk is formed by the delta and b chains.

It localises to the cell inner membrane. Functionally, f(1)F(0) ATP synthase produces ATP from ADP in the presence of a proton or sodium gradient. F-type ATPases consist of two structural domains, F(1) containing the extramembraneous catalytic core and F(0) containing the membrane proton channel, linked together by a central stalk and a peripheral stalk. During catalysis, ATP synthesis in the catalytic domain of F(1) is coupled via a rotary mechanism of the central stalk subunits to proton translocation. Its function is as follows. Key component of the F(0) channel; it plays a direct role in translocation across the membrane. A homomeric c-ring of between 10-14 subunits forms the central stalk rotor element with the F(1) delta and epsilon subunits. In Blochmanniella floridana, this protein is ATP synthase subunit c.